Consider the following 217-residue polypeptide: Claudin-9 (217 aa).

Residues 1–12 (MASTGLELLGMT) are Cytoplasmic-facing. Residues 13–33 (LAVLGWLGTLVSCALPLWKVT) traverse the membrane as a helical segment. At 34-81 (AFIGNSIVVAQVVWEGLWMSCVVQSTGQMQCKVYDSLLALPQDLQAAR) the chain is on the extracellular side. Residues 82 to 102 (ALCVVALLLALLGLLVAITGA) form a helical membrane-spanning segment. The Cytoplasmic segment spans residues 103–116 (QCTTCVEDEGAKAR). Residues 117–137 (IVLTAGVLLLLSGILVLIPVC) traverse the membrane as a helical segment. The Extracellular portion of the chain corresponds to 138-159 (WTAHAIIQDFYNPLVAEALKRE). Residues 160–180 (LGASLYLGWAAAALLMLGGGL) traverse the membrane as a helical segment. Residues 181–217 (LCCTCPPSHFERPRGPRLGYSIPSRSGASGLDKRDYV) lie on the Cytoplasmic side of the membrane.

Belongs to the claudin family. In terms of assembly, interacts with CLDN1, CD81 and OCLN.

Its subcellular location is the cell junction. It is found in the tight junction. The protein localises to the cell membrane. Its function is as follows. Plays a major role in tight junction-specific obliteration of the intercellular space, through calcium-independent cell-adhesion activity. This is Claudin-9 (Cldn9) from Mus musculus (Mouse).